A 390-amino-acid polypeptide reads, in one-letter code: SSTETPPSYNQLNYNENLLRFFNSKPVTAPVELDPPKVESSYVSSARGEDARSTLSPVQGFEGSGGSGSSGNFTTGSNLHMSSVTNTSNAGTGTSGTGNSGDGGGGGGADGTGSGAAPPVTLTESLLNKHNDEMEKFMLKKHRESRGRSGEKNKKSANEAMKMLEYSGPGPGHGHGIKRGGSHSWEGEANKPKQQLTLNPSGGGGGMPLLLDITHTSSSTQNKGLAGVGVGGAGGGVGGGGSGTGLGGNGNVGSGNGNNNQASTNQYTQSGLPCTQNINLWPPFSVGITTPTSVLSSHTAVAQSSFSPQHSLFPTFYYIPASIAASSPSGTNPSPNRPHKHAHVHSSSEKPSTSQAAAATMPLQYMTGVMYPHPSLFYTHPAAAAATAMV.

Disordered regions lie at residues 27–120, 164–188, 247–266, and 327–356; these read VTAP…APPV, LEYSGPGPGHGHGIKRGGSHSWEGE, GGNGNVGSGNGNNNQASTNQ, and SPSGTNPSPNRPHKHAHVHSSSEKPSTSQA. The span at 93–114 shows a compositional bias: gly residues; that stretch reads GTSGTGNSGDGGGGGGADGTGS. The span at 247 to 256 shows a compositional bias: gly residues; it reads GGNGNVGSGN.

In terms of assembly, forms a heterodimer with timeless (TIM); the complex then translocates into the nucleus. In terms of processing, phosphorylated with a circadian rhythmicity, probably by the double-time protein (dbt). Phosphorylation could be implicated in the stability of per monomer and in the formation of heterodimer per-tim.

The protein resides in the nucleus. The protein localises to the cytoplasm. It is found in the perinuclear region. Essential for biological clock functions. Determines the period length of circadian and ultradian rhythms; an increase in PER dosage leads to shortened circadian rhythms and a decrease leads to lengthened circadian rhythms. Essential for the circadian rhythmicity of locomotor activity, eclosion behavior, and for the rhythmic component of the male courtship song that originates in the thoracic nervous system. The biological cycle depends on the rhythmic formation and nuclear localization of the TIM-PER complex. Light induces the degradation of TIM, which promotes elimination of PER. Nuclear activity of the heterodimer coordinatively regulates PER and TIM transcription through a negative feedback loop. Behaves as a negative element in circadian transcriptional loop. Does not appear to bind DNA, suggesting indirect transcriptional inhibition. The polypeptide is Period circadian protein (per) (Drosophila tropicalis (Fruit fly)).